The chain runs to 31 residues: MSDIN-like toxin proprotein 4 (31 aa).

Positions 1-10 (MSDINGTRLP) are excised as a propeptide. Positions 11–16 (WLATCP) form a cross-link, cyclopeptide (Trp-Pro). Positions 17–31 (CVGEDVNPTLSRGER) are excised as a propeptide.

The protein belongs to the MSDIN fungal toxin family. Processed by the macrocyclase-peptidase enzyme POPB to yield a toxic cyclic hexapeptide. POPB first removes 10 residues from the N-terminus. Conformational trapping of the remaining peptide forces the enzyme to release this intermediate rather than proceed to macrocyclization. The enzyme rebinds the remaining peptide in a different conformation and catalyzes macrocyclization of the N-terminal 6 residues.

In terms of biological role, probable toxin that belongs to the MSDIN-like toxin family responsible for a large number of food poisoning cases and deaths. This Amanita phalloides (Death cap) protein is MSDIN-like toxin proprotein 4.